Consider the following 228-residue polypeptide: Geranylgeranylglyceryl phosphate synthase (228 aa).

Residue lysine 13 participates in sn-glycerol 1-phosphate binding. Mg(2+) is bound by residues aspartate 15 and threonine 41. Residues 159 to 164, glycine 189, and 209 to 210 each bind sn-glycerol 1-phosphate; these read YIEYSG and GN.

It belongs to the GGGP/HepGP synthase family. Group I subfamily. It depends on Mg(2+) as a cofactor.

It is found in the cytoplasm. The catalysed reaction is sn-glycerol 1-phosphate + (2E,6E,10E)-geranylgeranyl diphosphate = sn-3-O-(geranylgeranyl)glycerol 1-phosphate + diphosphate. It functions in the pathway membrane lipid metabolism; glycerophospholipid metabolism. Its function is as follows. Prenyltransferase that catalyzes the transfer of the geranylgeranyl moiety of geranylgeranyl diphosphate (GGPP) to the C3 hydroxyl of sn-glycerol-1-phosphate (G1P). This reaction is the first ether-bond-formation step in the biosynthesis of archaeal membrane lipids. The chain is Geranylgeranylglyceryl phosphate synthase from Methanospirillum hungatei JF-1 (strain ATCC 27890 / DSM 864 / NBRC 100397 / JF-1).